Reading from the N-terminus, the 238-residue chain is Snake venom metalloproteinase HF-1 (238 aa).

The Peptidase M12B domain occupies 17–221; it reads RYIQLVVVAD…YNPQCILNKP (205 aa). Residue aspartate 106 participates in Ca(2+) binding. Cystine bridges form between cysteine 130–cysteine 216 and cysteine 174–cysteine 181. Histidine 158 serves as a coordination point for Zn(2+). Glutamate 159 is an active-site residue. Positions 162 and 168 each coordinate Zn(2+). Cysteine 216 and asparagine 219 together coordinate Ca(2+).

Monomer. It depends on Zn(2+) as a cofactor. Expressed by the venom gland.

The protein localises to the secreted. Inhibited by EDTA and EGTA. Inhibited by serum and antihemorrhagic factors Da2-I and Da2-II from D.albiventris. Not inhibited by PMSF or SBT-I. Functionally, snake venom zinc metalloprotease that is weakly hemorrhagic and has Aalpha, Bbeta fibrinogenolytic activities. Cleaves the Aalpha chain of fibrinogen first, followed by the Bbeta chain and shows no effect on the gamma chain. Has caseinolytic activity. Induces dose-dependent edema. The polypeptide is Snake venom metalloproteinase HF-1 (Bothrops marajoensis (Marajo lancehead)).